The primary structure comprises 238 residues: MORN repeat-containing protein 3 (238 aa).

7 MORN repeats span residues 38–60 (YTGEWLNNLRHGKGTYMWKRRKS), 62–84 (YEGDWKCGERSGFGTYSVQDSNT), 91–113 (YSGYWDNDKKHGYGTHFYSAKEY), 114–136 (YEGEWKCGKRCGWGRMYFANGDI), 137–159 (YEGEWLEDKHSGQGMLCLANENR), 160–182 (YEGSWKDGKKHGPGKFYYLNKGQ), and 184–205 (YEGVWVEDIPKCGTMVDFGRTE).

The protein localises to the cytoplasmic vesicle. Its subcellular location is the secretory vesicle. The protein resides in the acrosome. Functionally, assembles a suppression complex (suppresome) by tethering SIRT1 and MDM2 to regulate composite modifications of p53/TP53. Confers both deacetylation-mediated functional inactivation, by SIRT1, and ubiquitination-dependent degradation, by MDM2, of p53/TP53, promoting a proliferative and cell survival behaviors. May play a role in the regulation of spermatogenesis. This chain is MORN repeat-containing protein 3 (morn3), found in Xenopus laevis (African clawed frog).